Consider the following 262-residue polypeptide: Hydroxyethylthiazole kinase (262 aa).

Residue Met43 coordinates substrate. Residues Arg118 and Thr164 each contribute to the ATP site. Residue Ala191 participates in substrate binding.

Belongs to the Thz kinase family. Requires Mg(2+) as cofactor.

The enzyme catalyses 5-(2-hydroxyethyl)-4-methylthiazole + ATP = 4-methyl-5-(2-phosphooxyethyl)-thiazole + ADP + H(+). Its pathway is cofactor biosynthesis; thiamine diphosphate biosynthesis; 4-methyl-5-(2-phosphoethyl)-thiazole from 5-(2-hydroxyethyl)-4-methylthiazole: step 1/1. Functionally, catalyzes the phosphorylation of the hydroxyl group of 4-methyl-5-beta-hydroxyethylthiazole (THZ). In Cereibacter sphaeroides (strain KD131 / KCTC 12085) (Rhodobacter sphaeroides), this protein is Hydroxyethylthiazole kinase.